A 648-amino-acid chain; its full sequence is Phosphomethylpyrimidine synthase (648 aa).

Substrate is bound by residues N236, M265, Y294, H330, 350 to 352, 391 to 394, and E430; these read SRG and DGLR. H434 provides a ligand contact to Zn(2+). Y457 contributes to the substrate binding site. H498 provides a ligand contact to Zn(2+). 3 residues coordinate [4Fe-4S] cluster: C578, C581, and C586.

It belongs to the ThiC family. In terms of assembly, homodimer. It depends on [4Fe-4S] cluster as a cofactor.

The enzyme catalyses 5-amino-1-(5-phospho-beta-D-ribosyl)imidazole + S-adenosyl-L-methionine = 4-amino-2-methyl-5-(phosphooxymethyl)pyrimidine + CO + 5'-deoxyadenosine + formate + L-methionine + 3 H(+). Its pathway is cofactor biosynthesis; thiamine diphosphate biosynthesis. Its function is as follows. Catalyzes the synthesis of the hydroxymethylpyrimidine phosphate (HMP-P) moiety of thiamine from aminoimidazole ribotide (AIR) in a radical S-adenosyl-L-methionine (SAM)-dependent reaction. This is Phosphomethylpyrimidine synthase from Aliivibrio salmonicida (strain LFI1238) (Vibrio salmonicida (strain LFI1238)).